The chain runs to 227 residues: Nodulation protein W (227 aa).

A Response regulatory domain is found at 21 to 135 (IVFVVEDDIS…ELLDAVVAAT (115 aa)). Aspartate 70 is subject to 4-aspartylphosphate. Residues 151 to 216 (LKSLFETLSP…DLIRMSETLG (66 aa)) form the HTH luxR-type domain. The segment at residues 175–194 (NKQVAAELGLAEITVKIYRG) is a DNA-binding region (H-T-H motif).

Phosphorylated by NodV.

The protein localises to the cytoplasm. Its function is as follows. Member of the two-component regulatory system NodV/NodW probably involved in the regulation of the transcription of genes involved in the nodulation process. The chain is Nodulation protein W (nodW) from Bradyrhizobium diazoefficiens (strain JCM 10833 / BCRC 13528 / IAM 13628 / NBRC 14792 / USDA 110).